Consider the following 105-residue polypeptide: Large ribosomal subunit protein uL24 (105 aa).

The protein belongs to the universal ribosomal protein uL24 family. In terms of assembly, part of the 50S ribosomal subunit.

One of two assembly initiator proteins, it binds directly to the 5'-end of the 23S rRNA, where it nucleates assembly of the 50S subunit. In terms of biological role, one of the proteins that surrounds the polypeptide exit tunnel on the outside of the subunit. In Xylella fastidiosa (strain 9a5c), this protein is Large ribosomal subunit protein uL24.